A 253-amino-acid chain; its full sequence is LexA repressor (253 aa).

The segment at residues 26–46 (FDEMKDALNLRSKSGIHRLIS) is a DNA-binding region (H-T-H motif). The disordered stretch occupies residues 73 to 97 (MPAATGKPPLAESGPPPVTAPATDE). Active-site for autocatalytic cleavage activity residues include S174 and K212.

The protein belongs to the peptidase S24 family. In terms of assembly, homodimer.

The enzyme catalyses Hydrolysis of Ala-|-Gly bond in repressor LexA.. Its function is as follows. Represses a number of genes involved in the response to DNA damage (SOS response), including recA and lexA. In the presence of single-stranded DNA, RecA interacts with LexA causing an autocatalytic cleavage which disrupts the DNA-binding part of LexA, leading to derepression of the SOS regulon and eventually DNA repair. The sequence is that of LexA repressor from Gluconacetobacter diazotrophicus (strain ATCC 49037 / DSM 5601 / CCUG 37298 / CIP 103539 / LMG 7603 / PAl5).